The primary structure comprises 302 residues: Dermonecrotic toxin LiSicTox-alphaIA2bii (302 aa).

Positions 1-14 are cleaved as a signal peptide; sequence IALILVCWSVLSQA. The propeptide occupies 15–22; it reads AQTDVEGR. His34 is a catalytic residue. Positions 54 and 56 each coordinate Mg(2+). The active-site Nucleophile is His70. 2 disulfides stabilise this stretch: Cys74-Cys80 and Cys76-Cys219. Asp114 serves as a coordination point for Mg(2+). The N-linked (GlcNAc...) asparagine glycan is linked to Asn279.

The protein belongs to the arthropod phospholipase D family. Class II subfamily. Mg(2+) serves as cofactor. As to expression, expressed by the venom gland.

The protein resides in the secreted. It carries out the reaction an N-(acyl)-sphingosylphosphocholine = an N-(acyl)-sphingosyl-1,3-cyclic phosphate + choline. The catalysed reaction is an N-(acyl)-sphingosylphosphoethanolamine = an N-(acyl)-sphingosyl-1,3-cyclic phosphate + ethanolamine. The enzyme catalyses a 1-acyl-sn-glycero-3-phosphocholine = a 1-acyl-sn-glycero-2,3-cyclic phosphate + choline. It catalyses the reaction a 1-acyl-sn-glycero-3-phosphoethanolamine = a 1-acyl-sn-glycero-2,3-cyclic phosphate + ethanolamine. Its function is as follows. Dermonecrotic toxins cleave the phosphodiester linkage between the phosphate and headgroup of certain phospholipids (sphingolipid and lysolipid substrates), forming an alcohol (often choline) and a cyclic phosphate. This toxin acts on sphingomyelin (SM). It may also act on ceramide phosphoethanolamine (CPE), lysophosphatidylcholine (LPC) and lysophosphatidylethanolamine (LPE), but not on lysophosphatidylserine (LPS), and lysophosphatidylglycerol (LPG). It acts by transphosphatidylation, releasing exclusively cyclic phosphate products as second products. Induces dermonecrosis, hemolysis, increased vascular permeability, edema, inflammatory response, and platelet aggregation. The sequence is that of Dermonecrotic toxin LiSicTox-alphaIA2bii from Loxosceles intermedia (Brown spider).